The sequence spans 521 residues: MIKQALISVSDKTGIVDFAKSLSDLGVKLLSTGGTAKLLADAGLPVTEVADYTGFPEMLDGRVKTLHPKVHGGILARRDLPEHMQALEQHGIPTIDLLVVNLYPFVATIAKDDCTLADAIENIDIGGPTMLRSAAKNHRDVTVVVDPADYAVVLDEMKANGNTVGYPTNFRLATKVFAHTAQYDGAITNYLTSLTDELKHASRSTYPATLNLAFDKVQDLRYGENPHQSAAFYRDLATPAGALANYRQLQGKELSYNNIADSDAAWECVKTFDAPACVIIKHANPCGVAVGNDSADAYAKAFQTDPTSAFGGIIAFNREVDEAAAQAVAKQFVEVLIAPSFSDAAKQVFAAKQNVRLLEIALGDGHNAFDLKRVGGGLLVQSLDSRNVQPSELRVVTKRQPTAKEMDDLLFAWRVAKYVKSNAIVFCGNGMTLGVGAGQMSRVDSARIASIKAQNAGLTLAGSAVASDAFFPFRDGLDVVVAAGATCVIQPGGSMRDDEVIAAADEHGIAMVLTGVRHFRH.

Residues 1–145 form the MGS-like domain; sequence MIKQALISVS…KNHRDVTVVV (145 aa).

Belongs to the PurH family.

The catalysed reaction is (6R)-10-formyltetrahydrofolate + 5-amino-1-(5-phospho-beta-D-ribosyl)imidazole-4-carboxamide = 5-formamido-1-(5-phospho-D-ribosyl)imidazole-4-carboxamide + (6S)-5,6,7,8-tetrahydrofolate. It catalyses the reaction IMP + H2O = 5-formamido-1-(5-phospho-D-ribosyl)imidazole-4-carboxamide. It participates in purine metabolism; IMP biosynthesis via de novo pathway; 5-formamido-1-(5-phospho-D-ribosyl)imidazole-4-carboxamide from 5-amino-1-(5-phospho-D-ribosyl)imidazole-4-carboxamide (10-formyl THF route): step 1/1. The protein operates within purine metabolism; IMP biosynthesis via de novo pathway; IMP from 5-formamido-1-(5-phospho-D-ribosyl)imidazole-4-carboxamide: step 1/1. This Burkholderia cenocepacia (strain HI2424) protein is Bifunctional purine biosynthesis protein PurH.